Consider the following 434-residue polypeptide: Histidinol dehydrogenase (434 aa).

The NAD(+) site is built by Tyr130, Gln188, and Asn211. Residues Ser237, Gln259, and His262 each contribute to the substrate site. Positions 259 and 262 each coordinate Zn(2+). Residues Glu326 and His327 each act as proton acceptor in the active site. 4 residues coordinate substrate: His327, Asp360, Glu414, and His419. Residue Asp360 participates in Zn(2+) binding. His419 is a binding site for Zn(2+).

Belongs to the histidinol dehydrogenase family. Homodimer. The cofactor is Zn(2+).

The enzyme catalyses L-histidinol + 2 NAD(+) + H2O = L-histidine + 2 NADH + 3 H(+). It participates in amino-acid biosynthesis; L-histidine biosynthesis; L-histidine from 5-phospho-alpha-D-ribose 1-diphosphate: step 9/9. Functionally, catalyzes the sequential NAD-dependent oxidations of L-histidinol to L-histidinaldehyde and then to L-histidine. This Escherichia coli O6:H1 (strain CFT073 / ATCC 700928 / UPEC) protein is Histidinol dehydrogenase.